We begin with the raw amino-acid sequence, 453 residues long: GTPase Der (453 aa).

EngA-type G domains are found at residues 3–167 (FTLA…PAQT) and 187–360 (IKVA…AVWN). Residues 9–16 (GRPNVGKS), 56–60 (DTAGL), 119–122 (NKSE), 193–200 (GRPNAGKS), 240–244 (DTAGL), and 305–308 (NKSD) contribute to the GTP site. The KH-like domain occupies 361–445 (TRIPTNPLNR…PIRLTLREKG (85 aa)).

It belongs to the TRAFAC class TrmE-Era-EngA-EngB-Septin-like GTPase superfamily. EngA (Der) GTPase family. In terms of assembly, associates with the 50S ribosomal subunit.

GTPase that plays an essential role in the late steps of ribosome biogenesis. This chain is GTPase Der, found in Azorhizobium caulinodans (strain ATCC 43989 / DSM 5975 / JCM 20966 / LMG 6465 / NBRC 14845 / NCIMB 13405 / ORS 571).